The primary structure comprises 523 residues: Cyclic di-GMP binding protein BcsE (523 aa).

Belongs to the BcsE family.

In terms of biological role, required for cellulose biosynthesis. May have protease activity, but BcsA is not targeted. Binds bis-(3'-5') cyclic diguanylic acid (c-di-GMP). This is Cyclic di-GMP binding protein BcsE from Salmonella typhimurium (strain LT2 / SGSC1412 / ATCC 700720).